A 227-amino-acid polypeptide reads, in one-letter code: NAD(P)H-quinone oxidoreductase subunit K, chloroplastic (227 aa).

[4Fe-4S] cluster is bound by residues C43, C44, C108, and C139.

The protein belongs to the complex I 20 kDa subunit family. NDH is composed of at least 16 different subunits, 5 of which are encoded in the nucleus. It depends on [4Fe-4S] cluster as a cofactor.

It localises to the plastid. It is found in the chloroplast thylakoid membrane. It catalyses the reaction a plastoquinone + NADH + (n+1) H(+)(in) = a plastoquinol + NAD(+) + n H(+)(out). The catalysed reaction is a plastoquinone + NADPH + (n+1) H(+)(in) = a plastoquinol + NADP(+) + n H(+)(out). Functionally, NDH shuttles electrons from NAD(P)H:plastoquinone, via FMN and iron-sulfur (Fe-S) centers, to quinones in the photosynthetic chain and possibly in a chloroplast respiratory chain. The immediate electron acceptor for the enzyme in this species is believed to be plastoquinone. Couples the redox reaction to proton translocation, and thus conserves the redox energy in a proton gradient. This Ranunculus macranthus (Large buttercup) protein is NAD(P)H-quinone oxidoreductase subunit K, chloroplastic.